A 419-amino-acid chain; its full sequence is Enolase (419 aa).

Residue Q161 participates in (2R)-2-phosphoglycerate binding. Residue E205 is the Proton donor of the active site. 3 residues coordinate Mg(2+): D240, E283, and D309. Positions 334, 363, 364, and 385 each coordinate (2R)-2-phosphoglycerate. The Proton acceptor role is filled by K334.

It belongs to the enolase family. Requires Mg(2+) as cofactor.

The protein resides in the cytoplasm. The protein localises to the secreted. Its subcellular location is the cell surface. The catalysed reaction is (2R)-2-phosphoglycerate = phosphoenolpyruvate + H2O. It functions in the pathway carbohydrate degradation; glycolysis; pyruvate from D-glyceraldehyde 3-phosphate: step 4/5. In terms of biological role, catalyzes the reversible conversion of 2-phosphoglycerate (2-PG) into phosphoenolpyruvate (PEP). It is essential for the degradation of carbohydrates via glycolysis. This chain is Enolase, found in Saccharolobus islandicus (strain L.S.2.15 / Lassen #1) (Sulfolobus islandicus).